The chain runs to 94 residues: Large ribosomal subunit protein uL22 (94 aa).

The protein belongs to the universal ribosomal protein uL22 family. Part of the 50S ribosomal subunit.

Functionally, this protein binds specifically to 23S rRNA; its binding is stimulated by other ribosomal proteins, e.g. L4, L17, and L20. It is important during the early stages of 50S assembly. It makes multiple contacts with different domains of the 23S rRNA in the assembled 50S subunit and ribosome. Its function is as follows. The globular domain of the protein is located near the polypeptide exit tunnel on the outside of the subunit, while an extended beta-hairpin is found that lines the wall of the exit tunnel in the center of the 70S ribosome. This chain is Large ribosomal subunit protein uL22 (rplV), found in Tomato big bud phytoplasma.